Here is a 76-residue protein sequence, read N- to C-terminus: Omega/kappa-hexatoxin-Ar1g (76 aa).

An N-terminal signal peptide occupies residues 1–22 (MNTATGFIVLLVLATVLGGIEA). Positions 23–35 (GESHMRKDAMGRV) are excised as a propeptide. 3 cysteine pairs are disulfide-bonded: Cys-40–Cys-55, Cys-47–Cys-60, and Cys-54–Cys-74.

The protein belongs to the neurotoxin 08 (Shiva) family. 02 (omega/kappa toxin) subfamily. Expressed by the venom gland.

The protein localises to the secreted. Toxin that may inhibit ion channels. In Atrax robustus (Sydney funnel-web spider), this protein is Omega/kappa-hexatoxin-Ar1g.